The primary structure comprises 284 residues: tRNA dimethylallyltransferase (284 aa).

Residue Gly6–Ser13 coordinates ATP. Thr8–Ser13 lines the substrate pocket. Residues Asp31–Ser34 form an interaction with substrate tRNA region.

This sequence belongs to the IPP transferase family. Monomer. Mg(2+) serves as cofactor.

It catalyses the reaction adenosine(37) in tRNA + dimethylallyl diphosphate = N(6)-dimethylallyladenosine(37) in tRNA + diphosphate. Its function is as follows. Catalyzes the transfer of a dimethylallyl group onto the adenine at position 37 in tRNAs that read codons beginning with uridine, leading to the formation of N6-(dimethylallyl)adenosine (i(6)A). This Nautilia profundicola (strain ATCC BAA-1463 / DSM 18972 / AmH) protein is tRNA dimethylallyltransferase.